The sequence spans 201 residues: Holliday junction branch migration complex subunit RuvA (201 aa).

Residues 1–63 form a domain I region; it reads MYDYIKGTVT…EDNISLFGFQ (63 aa). The segment at 64 to 142 is domain II; it reads TTEERYLFKK…DVVASEIVYV (79 aa). A flexible linker region spans residues 143–153; sequence APENDMVAGLS. A domain III region spans residues 153–201; sequence SPQLEEAVLALEALGYSTRELKKVIPKLAKEADLTSDAYIKLALQLMTK.

This sequence belongs to the RuvA family. Homotetramer. Forms an RuvA(8)-RuvB(12)-Holliday junction (HJ) complex. HJ DNA is sandwiched between 2 RuvA tetramers; dsDNA enters through RuvA and exits via RuvB. An RuvB hexamer assembles on each DNA strand where it exits the tetramer. Each RuvB hexamer is contacted by two RuvA subunits (via domain III) on 2 adjacent RuvB subunits; this complex drives branch migration. In the full resolvosome a probable DNA-RuvA(4)-RuvB(12)-RuvC(2) complex forms which resolves the HJ.

The protein resides in the cytoplasm. The RuvA-RuvB-RuvC complex processes Holliday junction (HJ) DNA during genetic recombination and DNA repair, while the RuvA-RuvB complex plays an important role in the rescue of blocked DNA replication forks via replication fork reversal (RFR). RuvA specifically binds to HJ cruciform DNA, conferring on it an open structure. The RuvB hexamer acts as an ATP-dependent pump, pulling dsDNA into and through the RuvAB complex. HJ branch migration allows RuvC to scan DNA until it finds its consensus sequence, where it cleaves and resolves the cruciform DNA. The polypeptide is Holliday junction branch migration complex subunit RuvA (Listeria monocytogenes serovar 1/2a (strain ATCC BAA-679 / EGD-e)).